The sequence spans 157 residues: Phosphopantetheine adenylyltransferase (157 aa).

S9 contributes to the substrate binding site. ATP is bound by residues 9-10 (SF) and H17. The substrate site is built by K41, V73, and K87. Residues 88-90 (GLR), E98, and 122-128 (YSFVSSS) contribute to the ATP site.

The protein belongs to the bacterial CoaD family. In terms of assembly, homohexamer. It depends on Mg(2+) as a cofactor.

It localises to the cytoplasm. It catalyses the reaction (R)-4'-phosphopantetheine + ATP + H(+) = 3'-dephospho-CoA + diphosphate. Its pathway is cofactor biosynthesis; coenzyme A biosynthesis; CoA from (R)-pantothenate: step 4/5. In terms of biological role, reversibly transfers an adenylyl group from ATP to 4'-phosphopantetheine, yielding dephospho-CoA (dPCoA) and pyrophosphate. The chain is Phosphopantetheine adenylyltransferase from Mycobacterium marinum (strain ATCC BAA-535 / M).